Reading from the N-terminus, the 177-residue chain is Peptide methionine sulfoxide reductase MsrA (177 aa).

The active site involves Cys14.

It belongs to the MsrA Met sulfoxide reductase family.

It catalyses the reaction L-methionyl-[protein] + [thioredoxin]-disulfide + H2O = L-methionyl-(S)-S-oxide-[protein] + [thioredoxin]-dithiol. The catalysed reaction is [thioredoxin]-disulfide + L-methionine + H2O = L-methionine (S)-S-oxide + [thioredoxin]-dithiol. Functionally, has an important function as a repair enzyme for proteins that have been inactivated by oxidation. Catalyzes the reversible oxidation-reduction of methionine sulfoxide in proteins to methionine. This chain is Peptide methionine sulfoxide reductase MsrA, found in Bacillus velezensis (strain DSM 23117 / BGSC 10A6 / LMG 26770 / FZB42) (Bacillus amyloliquefaciens subsp. plantarum).